We begin with the raw amino-acid sequence, 177 residues long: Mitochondrial inner membrane protease subunit 2 (177 aa).

Active-site residues include S41 and K91. The helical transmembrane segment at 134–152 threads the bilayer; the sequence is TFGPISSGLVIGKAITIVW.

The protein belongs to the peptidase S26 family. IMP2 subfamily. In terms of assembly, component of the mitochondrial inner membrane peptidase (IMP) complex which at least consists of IMP1, IMP2 and SOM1. In terms of processing, the N-terminus is blocked.

The protein localises to the mitochondrion inner membrane. In terms of biological role, catalytic component of the mitochondrial inner membrane peptidase (IMP) complex. IMP catalyzes the removal of signal peptides required for the targeting of proteins from the mitochondrial matrix, across the inner membrane, into the inter-membrane space. The two catalytic IMP subunits seem to have non-overlapping substrate specificities. IMP2 substrates include nuclear encoded CYB2, mitochondrially encoded COX2 and cytochrome c1. Required for the stability of IMP1. The protein is Mitochondrial inner membrane protease subunit 2 (IMP2) of Saccharomyces cerevisiae (strain ATCC 204508 / S288c) (Baker's yeast).